Reading from the N-terminus, the 136-residue chain is Blasticidin-S acetyltransferase (136 aa).

The N-acetyltransferase domain maps to 1–136 (MLSLPRLQTV…ITSHLLVKEL (136 aa)).

Functionally, confers resistance to blasticidin S antibiotic. The polypeptide is Blasticidin-S acetyltransferase (bls) (Streptomyces morookaense (Streptoverticillium morookaense)).